A 712-amino-acid chain; its full sequence is MISSRIGGAGGVELSRVNQQHDTVPAQTAHPNAVTAGMNPPLTPDQSGSHATESSSAGAARLNVAARHTQLLQAFKAEHGTAPVSGAPMISSRAALLIGSLLQAEPLPFEVMAEKLSPERYQLKQFQGSDLQQRLEKFAQPGQIPDKAEVGQLIKGFAQSVADQLEHFQLMHDASPATVGQHAKADKATLAVSQTALGEYAGRASKAIGEGLSNSIASLDEHISALDLTLQDAEQGNKESLHADRQALVDAKTTLVGLHADFVKSPEAKRLASVAAHTQLDNVVSDLVTARNTVGGWKGAGPIVAAAVPQFLSSMTHLGYVRLSTSDKLRDTIPETSSDANMLKASIIGMVAGIAHETVNSVVKPMFQAALQKTGLNERLNMVPMKAVDTNTVIPDPFELKSEHGELVKKTPEEVAQDKAFVKSERALLNQKKVQGSSTHPVGELMAYSAFGGSQAVRQMLNDVHQINGQTLSARALASGFGGAVSASSQTLLQLKSNYVDPQGRKIPVFTPDRAESDLKKDLLKGMDLREPSVRTTFYSKALSGIQSSALTSALPPVTAQAEGASGTLSAGAILRNMALAATGSVSYLSTLYTNQSVTAEAKALKAAGMGGATPMLDRTETALNNIRHPNRESLPHTFQKSTLSGIPRVAENAYHMGRGALQLPTQMAVDTVRVVDEGVLNAVASAREALKQPTKDDDALRALEEGLLDPR.

The segment at aspartate 22 to glycine 58 is disordered. Residues proline 44–alanine 57 show a composition bias toward polar residues.

In terms of assembly, interacts with the chaperone ShcM. Interacts with host plant BIG5/ATMIN7.

It is found in the secreted. Its subcellular location is the host membrane. In terms of biological role, involved in the suppression of basal resistance and promotion of disease symptoms in plants. Mediates the ubiquitination and degradation, via the host proteasome, of a low-abundance immunity-associated protein in Arabidopsis thaliana. May be involved in the inhibition of a host vesicle trafficking pathway. The sequence is that of Effector protein HopM1 (hopM1) from Pseudomonas syringae pv. tomato (strain ATCC BAA-871 / DC3000).